Reading from the N-terminus, the 452-residue chain is Protein phosphatase 1F (452 aa).

Residues 153-410 (LVSIHAIRNT…DNITVMVVFL (258 aa)) form the PPM-type phosphatase domain. D195, G196, D357, and D401 together coordinate Mn(2+). S452 bears the Phosphoserine mark.

It belongs to the PP2C family. In terms of assembly, associates with FEM1B. Mg(2+) serves as cofactor. It depends on Mn(2+) as a cofactor. Expressed in the liver.

It carries out the reaction O-phospho-L-seryl-[protein] + H2O = L-seryl-[protein] + phosphate. The enzyme catalyses O-phospho-L-threonyl-[protein] + H2O = L-threonyl-[protein] + phosphate. Its function is as follows. Dephosphorylates and concomitantly deactivates CaM-kinase II activated upon autophosphorylation, and CaM-kinases IV and I activated upon phosphorylation by CaM-kinase kinase. Promotes apoptosis. The polypeptide is Protein phosphatase 1F (Ppm1f) (Mus musculus (Mouse)).